The chain runs to 110 residues: Nucleoid-associated protein KPK_4227 (110 aa).

Residues 1 to 22 (MFGGKGGLGNLMKQAQQMQDKM) are disordered.

This sequence belongs to the YbaB/EbfC family. Homodimer.

The protein localises to the cytoplasm. The protein resides in the nucleoid. In terms of biological role, binds to DNA and alters its conformation. May be involved in regulation of gene expression, nucleoid organization and DNA protection. This is Nucleoid-associated protein KPK_4227 from Klebsiella pneumoniae (strain 342).